The chain runs to 242 residues: Spiralin (242 aa).

A signal peptide spans 1–23 (MKKLLSILAVFGVSAVGTTSVVA). The N-palmitoyl cysteine moiety is linked to residue C24. Residue C24 is the site of S-diacylglycerol cysteine attachment.

This sequence belongs to the spiralin family. In terms of assembly, seems to occur as dimer, tetramers, and large oligomers of identical chains. Post-translationally, palmitate and stearate are the major lipid components.

It is found in the cell membrane. Major membrane protein of spiroplasma. The sequence is that of Spiralin (spi) from Spiroplasma melliferum.